Here is a 145-residue protein sequence, read N- to C-terminus: D-aminoacyl-tRNA deacylase (145 aa).

A Gly-cisPro motif, important for rejection of L-amino acids motif is present at residues 137-138; the sequence is GP.

This sequence belongs to the DTD family. Homodimer.

It is found in the cytoplasm. The catalysed reaction is glycyl-tRNA(Ala) + H2O = tRNA(Ala) + glycine + H(+). The enzyme catalyses a D-aminoacyl-tRNA + H2O = a tRNA + a D-alpha-amino acid + H(+). In terms of biological role, an aminoacyl-tRNA editing enzyme that deacylates mischarged D-aminoacyl-tRNAs. Also deacylates mischarged glycyl-tRNA(Ala), protecting cells against glycine mischarging by AlaRS. Acts via tRNA-based rather than protein-based catalysis; rejects L-amino acids rather than detecting D-amino acids in the active site. By recycling D-aminoacyl-tRNA to D-amino acids and free tRNA molecules, this enzyme counteracts the toxicity associated with the formation of D-aminoacyl-tRNA entities in vivo and helps enforce protein L-homochirality. In Pseudoalteromonas translucida (strain TAC 125), this protein is D-aminoacyl-tRNA deacylase.